The primary structure comprises 154 residues: Xanthine-guanine phosphoribosyltransferase (154 aa).

5-phospho-alpha-D-ribose 1-diphosphate is bound by residues Arg-37 to Gly-38, Arg-69, and Glu-88 to Thr-96. Residue Arg-69 participates in GMP binding. A Mg(2+)-binding site is contributed by Asp-89. The guanine site is built by Asp-92 and Ile-135. Xanthine contacts are provided by Asp-92 and Ile-135. Residues Asp-92–Thr-96 and Trp-134–Ile-135 contribute to the GMP site.

This sequence belongs to the purine/pyrimidine phosphoribosyltransferase family. XGPT subfamily. In terms of assembly, homotetramer. Requires Mg(2+) as cofactor.

It is found in the cell inner membrane. It carries out the reaction GMP + diphosphate = guanine + 5-phospho-alpha-D-ribose 1-diphosphate. The catalysed reaction is XMP + diphosphate = xanthine + 5-phospho-alpha-D-ribose 1-diphosphate. It catalyses the reaction IMP + diphosphate = hypoxanthine + 5-phospho-alpha-D-ribose 1-diphosphate. Its pathway is purine metabolism; GMP biosynthesis via salvage pathway; GMP from guanine: step 1/1. It participates in purine metabolism; XMP biosynthesis via salvage pathway; XMP from xanthine: step 1/1. Functionally, purine salvage pathway enzyme that catalyzes the transfer of the ribosyl-5-phosphate group from 5-phospho-alpha-D-ribose 1-diphosphate (PRPP) to the N9 position of the 6-oxopurines guanine and xanthine to form the corresponding ribonucleotides GMP (guanosine 5'-monophosphate) and XMP (xanthosine 5'-monophosphate), with the release of PPi. To a lesser extent, also acts on hypoxanthine. The sequence is that of Xanthine-guanine phosphoribosyltransferase from Vibrio atlanticus (strain LGP32) (Vibrio splendidus (strain Mel32)).